A 272-amino-acid chain; its full sequence is Imidazole glycerol phosphate synthase subunit HisF (272 aa).

Catalysis depends on residues D11 and D130.

Belongs to the HisA/HisF family. In terms of assembly, heterodimer of HisH and HisF.

It is found in the cytoplasm. It catalyses the reaction 5-[(5-phospho-1-deoxy-D-ribulos-1-ylimino)methylamino]-1-(5-phospho-beta-D-ribosyl)imidazole-4-carboxamide + L-glutamine = D-erythro-1-(imidazol-4-yl)glycerol 3-phosphate + 5-amino-1-(5-phospho-beta-D-ribosyl)imidazole-4-carboxamide + L-glutamate + H(+). It participates in amino-acid biosynthesis; L-histidine biosynthesis; L-histidine from 5-phospho-alpha-D-ribose 1-diphosphate: step 5/9. In terms of biological role, IGPS catalyzes the conversion of PRFAR and glutamine to IGP, AICAR and glutamate. The HisF subunit catalyzes the cyclization activity that produces IGP and AICAR from PRFAR using the ammonia provided by the HisH subunit. The sequence is that of Imidazole glycerol phosphate synthase subunit HisF from Methanococcus maripaludis (strain C5 / ATCC BAA-1333).